A 225-amino-acid polypeptide reads, in one-letter code: Probable molybdenum cofactor guanylyltransferase (225 aa).

GTP is bound by residues 20–22, lysine 33, aspartate 88, and aspartate 117; that span reads LAG. Aspartate 117 contacts Mg(2+).

Belongs to the MobA family. Mg(2+) is required as a cofactor.

The protein resides in the cytoplasm. It catalyses the reaction Mo-molybdopterin + GTP + H(+) = Mo-molybdopterin guanine dinucleotide + diphosphate. Its function is as follows. Transfers a GMP moiety from GTP to Mo-molybdopterin (Mo-MPT) cofactor (Moco or molybdenum cofactor) to form Mo-molybdopterin guanine dinucleotide (Mo-MGD) cofactor. This chain is Probable molybdenum cofactor guanylyltransferase, found in Methanosarcina acetivorans (strain ATCC 35395 / DSM 2834 / JCM 12185 / C2A).